We begin with the raw amino-acid sequence, 185 residues long: Elongation factor P (185 aa).

This sequence belongs to the elongation factor P family.

The protein resides in the cytoplasm. It functions in the pathway protein biosynthesis; polypeptide chain elongation. Functionally, involved in peptide bond synthesis. Stimulates efficient translation and peptide-bond synthesis on native or reconstituted 70S ribosomes in vitro. Probably functions indirectly by altering the affinity of the ribosome for aminoacyl-tRNA, thus increasing their reactivity as acceptors for peptidyl transferase. This chain is Elongation factor P, found in Thermotoga petrophila (strain ATCC BAA-488 / DSM 13995 / JCM 10881 / RKU-1).